Consider the following 565-residue polypeptide: Glycine/sarcosine/dimethylglycine N-methyltransferase (565 aa).

Residues 1 to 10 show a composition bias toward basic and acidic residues; that stretch reads MTKSVDDLAR. A disordered region spans residues 1 to 34; the sequence is MTKSVDDLARGDQAGDEQDPVHREQQTFGDNPLE. S-adenosyl-L-methionine is bound by residues Tyr45, Trp53, Arg62, Ala86, Asp107, 134-135, and Leu152; that span reads DW. Asn154, Arg187, and Tyr226 together coordinate substrate.

The protein belongs to the class I-like SAM-binding methyltransferase superfamily. Glycine N-methyltransferase family. Monomer.

The catalysed reaction is glycine + 2 S-adenosyl-L-methionine = N,N-dimethylglycine + 2 S-adenosyl-L-homocysteine + 2 H(+). It catalyses the reaction sarcosine + 2 S-adenosyl-L-methionine = glycine betaine + 2 S-adenosyl-L-homocysteine + 2 H(+). It carries out the reaction glycine + S-adenosyl-L-methionine = sarcosine + S-adenosyl-L-homocysteine + H(+). The enzyme catalyses sarcosine + S-adenosyl-L-methionine = N,N-dimethylglycine + S-adenosyl-L-homocysteine + H(+). The catalysed reaction is N,N-dimethylglycine + S-adenosyl-L-methionine = glycine betaine + S-adenosyl-L-homocysteine + H(+). It functions in the pathway amine and polyamine biosynthesis; betaine biosynthesis via glycine pathway; betaine from glycine: step 1/3. Its pathway is amine and polyamine biosynthesis; betaine biosynthesis via glycine pathway; betaine from glycine: step 2/3. It participates in amine and polyamine biosynthesis; betaine biosynthesis via glycine pathway; betaine from glycine: step 3/3. In terms of biological role, catalyzes the methylation of glycine, sarcosine and dimethylglycine to sarcosine, dimethylglycine and betaine, respectively, with S-adenosylmethionine (AdoMet) acting as the methyl donor. Shows low level of activity on glycine when expressed in E.coli. This Actinopolyspora halophila protein is Glycine/sarcosine/dimethylglycine N-methyltransferase.